Reading from the N-terminus, the 860-residue chain is DNA mismatch repair protein MutS (860 aa).

Residue 607–614 (GPNMSGKS) coordinates ATP.

The protein belongs to the DNA mismatch repair MutS family.

Its function is as follows. This protein is involved in the repair of mismatches in DNA. It is possible that it carries out the mismatch recognition step. This protein has a weak ATPase activity. This is DNA mismatch repair protein MutS from Listeria monocytogenes serotype 4b (strain CLIP80459).